A 116-amino-acid chain; its full sequence is Host cell factor C1 regulator 1 (116 aa).

A disordered region spans residues 1–22; the sequence is MILQQPLERGPPGRDPRATTGV. Positions 54–57 are interaction with HCFC1; the sequence is DHPY. A Nuclear export signal motif is present at residues 88–97; it reads IPEALRLLRL.

Interacts with HCFC1.

The protein localises to the cytoplasm. It localises to the nucleus. Regulates HCFC1 activity by modulating its subcellular localization. Overexpression of HCFC1R1 leads to accumulation of HCFC1 in the cytoplasm. HCFC1R1-mediated export may provide the pool of cytoplasmic HCFC1 required for import of virion-derived VP16 into the nucleus. The protein is Host cell factor C1 regulator 1 (Hcfc1r1) of Rattus norvegicus (Rat).